We begin with the raw amino-acid sequence, 579 residues long: General transcriptional corepressor tupA (579 aa).

Residues 83–101 (NINASQRDLNSPSTFRSNS) show a composition bias toward polar residues. Residues 83–258 (NINASQRDLN…ENGKEKGTDW (176 aa)) are disordered. Low complexity-rich tracts occupy residues 109-128 (NNNN…NNNN), 157-198 (QQPG…LSPL), and 207-224 (MGNN…NNNN). Residues 227–256 (KKPDMEEVKEEDRRRHDTEMSEENGKEKGT) are compositionally biased toward basic and acidic residues. 7 WD repeats span residues 279-319 (QHNS…HAFV), 325-364 (DGDL…IQHT), 367-406 (GHEL…CAFT), 413-452 (GPKN…FLER), 455-494 (GHLD…SRSR), 501-540 (GHKD…THMM), and 543-579 (GHKN…KYDS).

This sequence belongs to the WD repeat TUP1 family. Associates with trfA to form the trfA-tupA corepressor complex.

Its subcellular location is the nucleus. In terms of biological role, acts as a component of the trfA-tupA corepressor complex which is involved in the repression of many genes in a wide variety of physiological processes. May also be involved in the derepression of at least some target genes. The complex is recruited to target genes by interaction with DNA-bound transcriptional repressors. The complex recruits histone deacetylases to produce a repressive chromatin structure, interacts with hypoacetylated N-terminal tails of histones H3 and H4 that have been programmed for repression by the action of histone deacetylases and interferes directly with the transcriptional machinery by associating with the RNA polymerase II mediator complex. The polypeptide is General transcriptional corepressor tupA (tupA) (Dictyostelium discoideum (Social amoeba)).